We begin with the raw amino-acid sequence, 261 residues long: RING-H2 finger protein ATL58 (261 aa).

The helical transmembrane segment at 25 to 45 (AFIFSVPICFTFIILFLFYLI) threads the bilayer. The segment at 100–142 (CSVCLGDYQPNDKLQQIPVCKHTFHMDCIDLWLTSHTTCPLCR) adopts an RING-type; atypical zinc-finger fold. Disordered regions lie at residues 149 to 227 (RSRQ…NDGH) and 241 to 261 (MEED…CRTG). The span at 194-221 (SGVSSQPESQPVVNHRGVSSQPESQPVN) shows a compositional bias: polar residues.

It belongs to the RING-type zinc finger family. ATL subfamily.

It localises to the membrane. It catalyses the reaction S-ubiquitinyl-[E2 ubiquitin-conjugating enzyme]-L-cysteine + [acceptor protein]-L-lysine = [E2 ubiquitin-conjugating enzyme]-L-cysteine + N(6)-ubiquitinyl-[acceptor protein]-L-lysine.. The protein operates within protein modification; protein ubiquitination. This is RING-H2 finger protein ATL58 (ATL58) from Arabidopsis thaliana (Mouse-ear cress).